The chain runs to 307 residues: Barttin (307 aa).

Residues 1 to 5 (MADEK) lie on the Cytoplasmic side of the membrane. Residues 1-72 (MADEKTFRIG…VPADSDFQGI (72 aa)) form a regulates channel membrane trafficking and anion conductance region. Residues 6 to 26 (TFRIGFIVLGLFLLSLGTFLM) form a helical membrane-spanning segment. Residues 27–32 (SHDRPQ) lie on the Extracellular side of the membrane. Residues 33-53 (VYGTFYAMGSVMVIGGVIWSM) traverse the membrane as a helical segment. 2 S-palmitoyl cysteine lipidation sites follow: cysteine 54 and cysteine 56. Over 54–307 (CQCYPKITFV…ELGFEPDIQG (254 aa)) the chain is Cytoplasmic. Serine 79 and serine 107 each carry phosphoserine. 2 disordered regions span residues 135–154 (TGAS…WMEA) and 161–224 (GSDE…RGPL). The span at 161 to 171 (GSDENEGEKSH) shows a compositional bias: basic and acidic residues. Serine 162 bears the Phosphoserine mark. Over residues 172–183 (SQSSPSVGPQGS) the composition is skewed to low complexity. Residues 198–207 (SEGSSLQPSP) are compositionally biased toward polar residues. A phosphoserine mark is found at serine 228 and serine 289. The disordered stretch occupies residues 255-307 (RKQQWSLRMKGETVQARAEEPEQEEEDLYYGLPDSPGNPLPDKELGFEPDIQG).

In terms of assembly, interacts with CLCNK channels. Forms probably heteromers with CLCNKA in the thin ascending limb of Henle and with CLCNKB in the thick ascending limb and more distal segments. Palmitoylation is necessary for activation of plasma membrane-inserted CLC-K/barttin channels. In terms of tissue distribution, expression is evident in inner and outer stripes of the outer medulla of the kidney, most probably representing thin limbs of Henle's loop together with some collecting duct coursing through the outer stripe. In situ hybridization in fetal kidney at 18.5 dpc revealed a clear continuity between hybridization signals from the thin limb of Henle's loop and the distal convoluted tubule, suggesting that part of the expression pattern may result from expression in the thick ascending limb of Henle's loop. In addition, strong signals are present in a subset of cortical tubules, representing distal convoluted tubules or cortical collecting duct. Strong expression is also observed in the inner medulla of the kidney. This expression does not extend all the way to the tip of the papilla. Thus this signal most probably represents cells of the thin ascending limbs. In the inner ear, strong and exclusive expression is detected in marginal cells of the stria vascularis. In addition to cochlear signal, expression is observed in dark cells localized at the base of the crista ampullaris of the vestibular organ.

It is found in the basolateral cell membrane. Functionally, regulatory subunit of anion-selective CLCNKA:BSND and CLCNKB:BSND heteromeric channels involved in basolateral chloride conductance along the nephron to achieve urine concentration and maintain systemic acid-base homeostasis, and in the stria vascularis of the inner ear to establish the endocochlear potential necessary for normal hearing. Most likely acts as a chaperone that allosterically regulates proper sorting of CLCNKA:BSND and CLCNKB:BSND channels at the basolateral plasma membrane domain and functional switch to ion conducting state. Mediates constitutive opening of channel common gates. This is Barttin from Mus musculus (Mouse).